The following is a 126-amino-acid chain: MTRIKRGSIARRRRAKTRLFASGARGAHSRLTRLIAQQTIRALASAHRDRDKKKRDFRRLWITRINGVIRQNVLSYSYSQLITNLKKEQLLLNRKMLAQIAISNRNCLSIIYSAIIILETKEEGQK.

This sequence belongs to the bacterial ribosomal protein bL20 family.

It is found in the plastid. The protein resides in the chloroplast. Binds directly to 23S ribosomal RNA and is necessary for the in vitro assembly process of the 50S ribosomal subunit. It is not involved in the protein synthesizing functions of that subunit. This Pelargonium hortorum (Common geranium) protein is Large ribosomal subunit protein bL20c.